A 529-amino-acid chain; its full sequence is CTP synthase (529 aa).

The segment at 1-270 (MKYIVVTGGV…ADVVCSYLSL (270 aa)) is amidoligase domain. Ser-12 lines the CTP pocket. UTP is bound at residue Ser-12. Residues 13–18 (GLGKGI) and Asp-70 each bind ATP. Mg(2+) contacts are provided by Asp-70 and Glu-145. CTP-binding positions include 152–154 (DIE), 191–196 (KTKPTQ), and Lys-227. UTP contacts are provided by residues 191-196 (KTKPTQ) and Lys-227. 243–245 (KDA) is a binding site for ATP. In terms of domain architecture, Glutamine amidotransferase type-1 spans 293 to 525 (VAIVSKYGIE…VEACKKNKSS (233 aa)). Gly-349 is an L-glutamine binding site. The active-site Nucleophile; for glutamine hydrolysis is Cys-376. Residues 377–380 (LGFQ), Glu-400, and Arg-455 each bind L-glutamine. Active-site residues include His-498 and Glu-500.

The protein belongs to the CTP synthase family. Homotetramer.

The enzyme catalyses UTP + L-glutamine + ATP + H2O = CTP + L-glutamate + ADP + phosphate + 2 H(+). It catalyses the reaction L-glutamine + H2O = L-glutamate + NH4(+). It carries out the reaction UTP + NH4(+) + ATP = CTP + ADP + phosphate + 2 H(+). Its pathway is pyrimidine metabolism; CTP biosynthesis via de novo pathway; CTP from UDP: step 2/2. Allosterically activated by GTP, when glutamine is the substrate; GTP has no effect on the reaction when ammonia is the substrate. The allosteric effector GTP functions by stabilizing the protein conformation that binds the tetrahedral intermediate(s) formed during glutamine hydrolysis. Inhibited by the product CTP, via allosteric rather than competitive inhibition. Catalyzes the ATP-dependent amination of UTP to CTP with either L-glutamine or ammonia as the source of nitrogen. Regulates intracellular CTP levels through interactions with the four ribonucleotide triphosphates. The polypeptide is CTP synthase (Methanoculleus marisnigri (strain ATCC 35101 / DSM 1498 / JR1)).